Here is a 431-residue protein sequence, read N- to C-terminus: Histidine--tRNA ligase (431 aa).

Belongs to the class-II aminoacyl-tRNA synthetase family. Homodimer.

Its subcellular location is the cytoplasm. The catalysed reaction is tRNA(His) + L-histidine + ATP = L-histidyl-tRNA(His) + AMP + diphosphate + H(+). This is Histidine--tRNA ligase from Neisseria meningitidis serogroup A / serotype 4A (strain DSM 15465 / Z2491).